A 341-amino-acid chain; its full sequence is DnaJ homolog subfamily C member 22 (341 aa).

In terms of domain architecture, TM2 spans 3 to 50 (KGLLVTYALWAVGGPAGLHHLYLGRDSHALLWMLTLGGGGLGWLWEFW). The next 7 membrane-spanning stretches (helical) occupy residues 5–25 (LLVT…HLYL), 30–50 (HALL…WEFW), 81–101 (FAAQ…SLSS), 105–125 (FYIV…AAVG), 135–155 (LGAA…ILPI), 185–205 (LGLA…CNTA), and 218–238 (FLNW…VLLL). One can recognise a J domain in the interval 277–341 (LAYQVLGLSE…QPRKPRGSRR (65 aa)).

It localises to the membrane. Its function is as follows. May function as a co-chaperone. This chain is DnaJ homolog subfamily C member 22 (DNAJC22), found in Pongo abelii (Sumatran orangutan).